We begin with the raw amino-acid sequence, 202 residues long: Large ribosomal subunit protein bL25 (202 aa).

Belongs to the bacterial ribosomal protein bL25 family. CTC subfamily. In terms of assembly, part of the 50S ribosomal subunit; part of the 5S rRNA/L5/L18/L25 subcomplex. Contacts the 5S rRNA. Binds to the 5S rRNA independently of L5 and L18.

This is one of the proteins that binds to the 5S RNA in the ribosome where it forms part of the central protuberance. The protein is Large ribosomal subunit protein bL25 of Paramagnetospirillum magneticum (strain ATCC 700264 / AMB-1) (Magnetospirillum magneticum).